We begin with the raw amino-acid sequence, 174 residues long: Peptide deformylase (174 aa).

Residues Cys94 and His136 each contribute to the Fe cation site. Glu137 is an active-site residue. His140 is a binding site for Fe cation.

It belongs to the polypeptide deformylase family. Fe(2+) serves as cofactor.

It catalyses the reaction N-terminal N-formyl-L-methionyl-[peptide] + H2O = N-terminal L-methionyl-[peptide] + formate. Removes the formyl group from the N-terminal Met of newly synthesized proteins. Requires at least a dipeptide for an efficient rate of reaction. N-terminal L-methionine is a prerequisite for activity but the enzyme has broad specificity at other positions. The sequence is that of Peptide deformylase from Maricaulis maris (strain MCS10) (Caulobacter maris).